A 71-amino-acid chain; its full sequence is Omega-conotoxin-like CnVIIE (71 aa).

Residues 1-22 (MKLTCVVIVAVLLLTACQLITA) form the signal peptide. The propeptide occupies 23-45 (DDSRGTQKHRALRSDTKLSMSTR). Disulfide bonds link C46/C61, C53/C65, and C60/C70. Residue P52 is modified to 4-hydroxyproline; partial. A Cysteine amide modification is found at C70.

Belongs to the conotoxin M superfamily. In terms of tissue distribution, expressed by the venom duct.

It is found in the secreted. Functionally, omega-conotoxins act at presynaptic membranes, they bind and block voltage-gated calcium channels (Cav). This chain is Omega-conotoxin-like CnVIIE, found in Conus consors (Singed cone).